Consider the following 218-residue polypeptide: Small ribosomal subunit protein uS3 (218 aa).

One can recognise a KH type-2 domain in the interval 2 to 71 (SAPQRRLPVY…IGRKGAIVKE (70 aa)).

It belongs to the universal ribosomal protein uS3 family. As to quaternary structure, part of the 30S ribosomal subunit.

Binds the lower part of the 30S subunit head. This is Small ribosomal subunit protein uS3 from Pyrobaculum aerophilum (strain ATCC 51768 / DSM 7523 / JCM 9630 / CIP 104966 / NBRC 100827 / IM2).